A 1107-amino-acid polypeptide reads, in one-letter code: MAKPVKYDEEEEEVSSSGEEEEEQSDGAGSGSGEEEDEEEEEAPAAAAGEAAGGEEEEVDEEEIEAVTTGAGADEEEEESGAAAAAPGEGDEESQSTEDDEAVVGEDDDADEAEGGAVVGKREKARLKEMQKLKKQKIQEILDTQNAAVDADMNNKGKGRLKYLLQQTEIFAHFAKGNQSKEKKPRGRGRHASKMTEEEEDEEYLKEEEDALAGSGGTRLLSQPSCIKGKMRDYQLAGLNWLIRLYENGINGILADEMGLGKTLQTISLLGYLHEFRGITGPHMVVAPKSTLGNWIKEIQRFCPILRAVKFLGNPEERNHIRENLLQPGKFDVCVTSFEMAIKEKTTLKRFSWRYIIIDEAHRIKNENSLLSKTMRIYNTNYRLLITGTPLQNNLHELWSLLNFLLPEIFSSAETFDEWFQISGENDQQEVVQQLHKVLRPFLLRRLKSDVEKGLPPKKETILKVGMSQMQKQYYRALLQKDLEVINAGGERKRLLNIAMQLRKCCNHPYLFQGAEPGPPYTTGEHLVENAGKMVLLDKLLPKLKDRDSRVLIFSQMTRLLDILEDYLMYRGYQYCRIDGNTGGEDRDASIEAFNKPGSEKFVFLLSTRAGGLGINLATADVVVLYDSDWNPQADLQAQDRAHRIGQKKEVQVFRFCTEYTIEEKVIERAYKKLALDALVIQQGRLAEQKTVNKDDLLQMVRFGAEMVFSSKDSTITDEDIDRIIAKGEETTAELDAKMKKFTEDAIKFKMDDTAELYDFDDDKEENKLDFKKLVSDNWIEPPRRERKRNYSESEYFKQALRQGAPAKPREPRIPRMPHLHDFQFFNNQRLNELYEKEVRYLMQANQKKDTIDGEDEDQLEPLTAEEQEEKEQLLEEGFATWTRRDFNTFIRACEKYGRNDIRSIAAEMEGKTEEEVQRYAKVFKERYKELSDYDRIIKNIERGEARISRKDEIMRAIGKKLDRYKNPWLELKIQYGQNKGKFYNEECDRFMLCMVHKLGYGNWDELKAAFRMSPLFRFDWFVKSRTTQELARRCDTLIRLVEKENQEYDEQERQARKDKRMAKNMTPTKRSALRVSEGETTPSNSFKRRRQSLMDDYVGSGRRKRG.

2 disordered regions span residues 1–124 (MAKP…KREK) and 177–217 (GNQS…GSGG). Acidic residues-rich tracts occupy residues 8–25 (DEEE…EEQS), 33–43 (GEEEDEEEEEA), 53–65 (GGEE…EEIE), and 89–114 (EGDE…DEAE). Residues 121–147 (KREKARLKEMQKLKKQKIQEILDTQNA) adopt a coiled-coil conformation. Basic residues predominate over residues 183 to 193 (KKPRGRGRHAS). Residues 197 to 211 (EEEEDEEYLKEEEDA) are compositionally biased toward acidic residues. In terms of domain architecture, Helicase ATP-binding spans 243–408 (IRLYENGING…WSLLNFLLPE (166 aa)). 256 to 263 (DEMGLGKT) is an ATP binding site. Positions 359–362 (DEAH) match the DEAH box motif. Positions 536–687 (LLDKLLPKLK…ALVIQQGRLA (152 aa)) constitute a Helicase C-terminal domain. SANT domains lie at 877–929 (EGFA…ERYK) and 978–1039 (QNKG…DTLI). Residues 1029-1067 (QELARRCDTLIRLVEKENQEYDEQERQARKDKRMAKNMT) are a coiled coil. Residues 1049 to 1107 (YDEQERQARKDKRMAKNMTPTKRSALRVSEGETTPSNSFKRRRQSLMDDYVGSGRRKRG) are disordered.

It belongs to the SNF2/RAD54 helicase family. ISWI subfamily.

The protein localises to the nucleus. Functionally, possesses intrinsic ATP-dependent nucleosome-remodeling activity. Constitutes the catalytic subunit of several complexes capable of forming ordered nucleosome arrays on chromatin in vitro. This chain is Probable chromatin-remodeling complex ATPase chain, found in Oryza sativa subsp. japonica (Rice).